A 322-amino-acid chain; its full sequence is Rhomboid-like protein 16, chloroplastic (322 aa).

Residues 1–52 (MHAIFCRRVAVGCSSPQLTKLVTKQASQSRHSLSHLLPFDLSSRFVPPYVVS) constitute a chloroplast transit peptide. Transmembrane regions (helical) follow at residues 110 to 130 (WINGANGVVFGLVIANAAVFT), 166 to 186 (FSHVGATHIILNMMGLCYFGA), 201 to 221 (YFAGALGGSVFFLSSHALSVI), 238 to 258 (IGKLGANGPVYAITLLDMLLY), 265 to 285 (FGLMLRVPVFAGIYSLGLNII), and 295 to 315 (TLTSLDQLGGVVVAVIAWARI).

It belongs to the peptidase S54 family.

The protein localises to the plastid. Its subcellular location is the chloroplast membrane. Rhomboid-type serine protease that catalyzes intramembrane proteolysis. May cleave the plastid translocon component Tic40. The chain is Rhomboid-like protein 16, chloroplastic from Arabidopsis thaliana (Mouse-ear cress).